The sequence spans 353 residues: Lipase ZK262.3 (353 aa).

The N-terminal stretch at 1–22 (MPKNLRFSVFLLFLLCINSVFG) is a signal peptide. Residues N32 and N64 are each glycosylated (N-linked (GlcNAc...) asparagine). S163 functions as the Nucleophile in the catalytic mechanism. D221 functions as the Charge relay system in the catalytic mechanism. N267 carries an N-linked (GlcNAc...) asparagine glycan. The cysteines at positions 277 and 288 are disulfide-linked. The active-site Charge relay system is the H306.

This sequence belongs to the AB hydrolase superfamily. Lipase family.

It is found in the secreted. Its function is as follows. Probable lipase. This chain is Lipase ZK262.3, found in Caenorhabditis elegans.